A 179-amino-acid chain; its full sequence is Nucleoside diphosphate kinase 6 (179 aa).

ATP-binding residues include K18, F67, R95, T101, R115, and N125. The active-site Pros-phosphohistidine intermediate is H128.

Belongs to the NDK family. Mg(2+) serves as cofactor.

It catalyses the reaction a 2'-deoxyribonucleoside 5'-diphosphate + ATP = a 2'-deoxyribonucleoside 5'-triphosphate + ADP. It carries out the reaction a ribonucleoside 5'-diphosphate + ATP = a ribonucleoside 5'-triphosphate + ADP. In terms of biological role, major role in the synthesis of nucleoside triphosphates other than ATP. The ATP gamma phosphate is transferred to the NDP beta phosphate via a ping-pong mechanism, using a phosphorylated active-site intermediate. The polypeptide is Nucleoside diphosphate kinase 6 (nme6) (Xenopus tropicalis (Western clawed frog)).